Consider the following 1197-residue polypeptide: DNA-directed RNA polymerase subunit beta (1197 aa).

Over residues 581–597 the composition is skewed to polar residues; the sequence is QANSPLNDDGSFTNPTV. 2 disordered regions span residues 581-603 and 1172-1197; these read QANSPLNDDGSFTNPTVTARHGD and EKPDLFKGDDDDTPRIPATKLDEENV.

The protein belongs to the RNA polymerase beta chain family. The RNAP catalytic core consists of 2 alpha, 1 beta, 1 beta' and 1 omega subunit. When a sigma factor is associated with the core the holoenzyme is formed, which can initiate transcription.

The catalysed reaction is RNA(n) + a ribonucleoside 5'-triphosphate = RNA(n+1) + diphosphate. DNA-dependent RNA polymerase catalyzes the transcription of DNA into RNA using the four ribonucleoside triphosphates as substrates. The polypeptide is DNA-directed RNA polymerase subunit beta (Oenococcus oeni (strain ATCC BAA-331 / PSU-1)).